Here is a 624-residue protein sequence, read N- to C-terminus: Methyl-accepting chemotaxis protein McpG (624 aa).

Residues I11–D31 form a helical membrane-spanning segment. Positions N36–G254 constitute a Cache domain. A helical transmembrane segment spans residues S272 to I292. One can recognise an HAMP domain in the interval R293 to R347. A Methyl-accepting transducer domain is found at A352 to N588.

It belongs to the methyl-accepting chemotaxis (MCP) protein family.

The protein localises to the cell membrane. Functionally, chemotactic-signal transducers respond to changes in the concentration of attractants and repellents in the environment, transduce a signal from the outside to the inside of the cell, and facilitate sensory adaptation through the variation of the level of methylation. McpG is a specific gamma-aminobutyric acid (GABA) chemoreceptor that recognizes GABA over a wide range of environmental conditions. Contributes to attraction to and colonization of plant roots. This Pseudomonas putida (strain ATCC 47054 / DSM 6125 / CFBP 8728 / NCIMB 11950 / KT2440) protein is Methyl-accepting chemotaxis protein McpG.